Consider the following 168-residue polypeptide: ATP synthase subunit b (168 aa).

A helical membrane pass occupies residues S10–I30.

The protein belongs to the ATPase B chain family. In terms of assembly, F-type ATPases have 2 components, F(1) - the catalytic core - and F(0) - the membrane proton channel. F(1) has five subunits: alpha(3), beta(3), gamma(1), delta(1), epsilon(1). F(0) has three main subunits: a(1), b(2) and c(10-14). The alpha and beta chains form an alternating ring which encloses part of the gamma chain. F(1) is attached to F(0) by a central stalk formed by the gamma and epsilon chains, while a peripheral stalk is formed by the delta and b chains.

The protein resides in the cell membrane. Its function is as follows. F(1)F(0) ATP synthase produces ATP from ADP in the presence of a proton or sodium gradient. F-type ATPases consist of two structural domains, F(1) containing the extramembraneous catalytic core and F(0) containing the membrane proton channel, linked together by a central stalk and a peripheral stalk. During catalysis, ATP synthesis in the catalytic domain of F(1) is coupled via a rotary mechanism of the central stalk subunits to proton translocation. Component of the F(0) channel, it forms part of the peripheral stalk, linking F(1) to F(0). The polypeptide is ATP synthase subunit b (Streptococcus suis (strain 98HAH33)).